Reading from the N-terminus, the 404-residue chain is Caspase-1 (404 aa).

The CARD domain maps to 1–91 (MADKVLKDKR…HLAQTLGLSS (91 aa)). A propeptide spanning residues 1-119 (MADKVLKDKR…SLPAFVENMP (119 aa)) is cleaved from the precursor. Residues H237 and C285 contribute to the active site. Residues 298–316 (SPKASTDSWTHQPLMLQSD) constitute a propeptide that is removed on maturation. Residue S302 is modified to Phosphoserine.

Belongs to the peptidase C14A family. As to quaternary structure, heterotetramer that consists of two anti-parallel arranged heterodimers, each one formed by a 20 kDa (Caspase-1 subunit p20) and a 10 kDa (Caspase-1 subunit p10) subunit. May be a component of the inflammasome, a protein complex which also includes PYCARD, CARD8 and NLRP2 and whose function would be the activation of pro-inflammatory caspases. Component of the AIM2 PANoptosome complex, a multiprotein complex that drives inflammatory cell death (PANoptosis). Both the p10 and p20 subunits interact with MEFV. Interacts with CARD17P/INCA and CARD18. Interacts with SERPINB1; this interaction regulates CASP1 activity. In terms of assembly, heterotetramer that consists of two anti-parallel arranged heterodimers, each one formed by a 20 kDa (Caspase-1 subunit p20) and a 10 kDa (Caspase-1 subunit p10) subunit. The two subunits are derived from the precursor sequence by an autocatalytic mechanism. In terms of processing, ubiquitinated via 'Lys-11'-linked polyubiquitination. Deubiquitinated by USP8.

It is found in the cytoplasm. The protein localises to the cell membrane. The enzyme catalyses Strict requirement for an Asp residue at position P1 and has a preferred cleavage sequence of Tyr-Val-Ala-Asp-|-.. Functionally, thiol protease involved in a variety of inflammatory processes by proteolytically cleaving other proteins, such as the precursors of the inflammatory cytokines interleukin-1 beta (IL1B) and interleukin 18 (IL18) as well as the pyroptosis inducer Gasdermin-D (GSDMD), into active mature peptides. Plays a key role in cell immunity as an inflammatory response initiator: once activated through formation of an inflammasome complex, it initiates a pro-inflammatory response through the cleavage of the two inflammatory cytokines IL1B and IL18, releasing the mature cytokines which are involved in a variety of inflammatory processes. Cleaves a tetrapeptide after an Asp residue at position P1. Also initiates pyroptosis, a programmed lytic cell death pathway, through cleavage of GSDMD. In contrast to cleavage of interleukin IL1B, recognition and cleavage of GSDMD is not strictly dependent on the consensus cleavage site but depends on an exosite interface on CASP1 that recognizes and binds the Gasdermin-D, C-terminal (GSDMD-CT) part. Cleaves and activates CASP7 in response to bacterial infection, promoting plasma membrane repair. Upon inflammasome activation, during DNA virus infection but not RNA virus challenge, controls antiviral immunity through the cleavage of CGAS, rendering it inactive. In apoptotic cells, cleaves SPHK2 which is released from cells and remains enzymatically active extracellularly. This Canis lupus familiaris (Dog) protein is Caspase-1 (CASP1).